The chain runs to 158 residues: Transcription elongation factor GreA (158 aa).

Residues 53–73 (EQQSFVEGRIQEIEGKLSNAQ) adopt a coiled-coil conformation.

It belongs to the GreA/GreB family.

Necessary for efficient RNA polymerase transcription elongation past template-encoded arresting sites. The arresting sites in DNA have the property of trapping a certain fraction of elongating RNA polymerases that pass through, resulting in locked ternary complexes. Cleavage of the nascent transcript by cleavage factors such as GreA or GreB allows the resumption of elongation from the new 3'terminus. GreA releases sequences of 2 to 3 nucleotides. This chain is Transcription elongation factor GreA, found in Alkalilimnicola ehrlichii (strain ATCC BAA-1101 / DSM 17681 / MLHE-1).